We begin with the raw amino-acid sequence, 199 residues long: MYEGAVQNLIDELGRLPGVGPKSAQRIAFHLLAAETADVHRLVNALVAVKERVRFCAVCGNIAEETQCRICRDPRRDDTVICVVEEPKDVVAIERTREFRGRYHVLGGAISPIEGVGPDDLRVKELMARLSEGRVTEVILATDPNLEGEATATYLARLLKPMGLKVTRLASGLPVGGDLEYADEVTLGRAFEGRRALDF.

A C4-type zinc finger spans residues 56-71; sequence CAVCGNIAEETQCRIC. The Toprim domain maps to 79–174; the sequence is TVICVVEEPK…KVTRLASGLP (96 aa).

It belongs to the RecR family.

Its function is as follows. May play a role in DNA repair. It seems to be involved in an RecBC-independent recombinational process of DNA repair. It may act with RecF and RecO. In Thermobifida fusca (strain YX), this protein is Recombination protein RecR.